Consider the following 1331-residue polypeptide: MRNLKLHQTLEFRDIQAPGKPQCFCLRAEQGTVLIGSERGLTEVDPVKKEVKTEISLVAEGFLPEDGSGCIVGIQDLLDQESVCVATASGDVIVCNVSTQQLECVGNVASGISVMSWSPDQELLLLATAQQTLIMMTRDYEVITEQQIHQDDFGEGKFITVGWGSKDTQFHGSEGRPITFPVQMHESALSWDDHRPQITWRGDGQFFAVSVVCSQTGARKIRVWNREFALQSTSESVPGLGPSLAWKPSGSLIASTQDKPNQQDVVFFEKNGLLHGYFTLPFLKDEVKVNDLLWNADSSVLAVWLEDLPKEGSSTLKSYVQLWTVGNYHWYLKQSLPFSTTGKNQIVSLLWDPVTPGRLHVLCQGWRYLCCDWHWTTDRSSGNSADDLANVAVIDGNKVLVTVFQRTVTPPPMCTYRLLIPHPVNQVMSSAHLGNDLAVLDASNQISVYKCDDKPDMDSTVKLGAVGGTGFKVPLRTPHLEKRYRIQFGNKEEEEDVSPLQFRFLTWIEGDAFLAISHSHSSPQSIIHHLTMAGSEGDEEQGQLNVSSSVTVDGVVIGLCCCSKTKSSAVQLADGQVLKYLWESPSSAVEPWKNSEGRPVRFARPCTQMEAAAIGGEECVLGLTDRCRFFINDTEVASNITSFAVCDDFLLVTTHSHTCQCFSLSGASLKMLQAGLCGSQVPSGEILRKVERGSRIVTVVPQDTKLILQMPRGNLEVVHHRALVLAQIRKWLDKLMFKEAFECMRKLRINLNLIHDHNPKVFLENVETFIKQIDSVNHLNLFFTELKEEDVTKTMYPPPVTKSVQVSTNPDGKKVDLICDAMRVAMETINPRKFCLSILTSHVKKTTPELDIVLQKVHELQGKIPFVPESVSAEEALKYLLLLVDVNELFNHSLGTYDFDLVLMVAEKSQKDPKEYLPFLNTLKKMETNYQRFTIDKYLKRYEKALGHLSKCGPEYFTECLNLIKDKNLYKEALKLYRPDSPQYQAVSVAYGEHLVQELLYEPAGLVFARCGAHEKALEAFLACGSWQQALCMAAQLQMAKDKVAGLARTLAGKLVEQRKHSEAATVLEQYALDYEEAVLLLLEGSAWEEALRLVYKYDRVDIIETSVKPSILEAQKNYMDFLDSQTATFIRHKNRLKVVRELKSQRPRVHVDHEVAHGRETDLFSETSSIRSGSEMSGRYSHSNSRISARSSKNRRKAERKKHSLKEGSPLEGLALLEALSEVVQSIEKLKDEVHAILKVLFLFEFEEQARELQRAFESTLQLMGTALPDIWTLTGQQSSSTPVLGPSSTVNSIMASYQQQKTCVPVLDAWACLPPKIDQRSQWKLSLLE.

A phosphoserine mark is found at serine 803, serine 1170, and serine 1173. The mediates dimerization stretch occupies residues 884–1331 (VDVNELFNHS…RSQWKLSLLE (448 aa)). Over residues 1167 to 1176 (ETSSIRSGSE) the composition is skewed to polar residues. The disordered stretch occupies residues 1167-1207 (ETSSIRSGSEMSGRYSHSNSRISARSSKNRRKAERKKHSLK). A required for binding to tRNA region spans residues 1190-1208 (ARSSKNRRKAERKKHSLKE). The span at 1193–1205 (SKNRRKAERKKHS) shows a compositional bias: basic residues.

This sequence belongs to the ELP1/IKA1 family. In terms of assembly, homodimer; dimerization promotes ELP1 stability and elongator complex formation. Component of the elongator complex which consists of ELP1, ELP2, ELP3, ELP4, ELP5 and ELP6. Interacts preferentially with MAP3K14/NIK followed by IKK-alpha and IKK-beta. Phosphorylated.

The protein resides in the cytoplasm. Its subcellular location is the nucleus. It participates in tRNA modification; 5-methoxycarbonylmethyl-2-thiouridine-tRNA biosynthesis. Its function is as follows. Component of the elongator complex which is required for multiple tRNA modifications, including mcm5U (5-methoxycarbonylmethyl uridine), mcm5s2U (5-methoxycarbonylmethyl-2-thiouridine), and ncm5U (5-carbamoylmethyl uridine). The elongator complex catalyzes formation of carboxymethyluridine in the wobble base at position 34 in tRNAs. Regulates the migration and branching of projection neurons in the developing cerebral cortex, through a process depending on alpha-tubulin acetylation. ELP1 binds to tRNA, mediating interaction of the elongator complex with tRNA. May act as a scaffold protein that assembles active IKK-MAP3K14 complexes (IKKA, IKKB and MAP3K14/NIK). The chain is Elongator complex protein 1 (Elp1) from Rattus norvegicus (Rat).